Consider the following 35-residue polypeptide: Pheromone-binding protein 1 (35 aa).

Belongs to the PBP/GOBP family. As to quaternary structure, homodimer. Antenna.

In terms of biological role, this major soluble protein in olfactory sensilla of male moths might serve to solubilize the extremely hydrophobic pheromone molecules and to transport pheromone through the aqueous lymph to receptors located on olfactory cilia. In Lymantria dispar (Gypsy moth), this protein is Pheromone-binding protein 1.